The following is a 540-amino-acid chain: Phosphoenolpyruvate carboxykinase (ATP) (540 aa).

Arg65 lines the substrate pocket. Lys87 carries the N6-acetyllysine modification. Residues Tyr207 and Lys213 each contribute to the substrate site. Residues Lys213, His232, and 248–256 (GLSGTGKTT) contribute to the ATP site. Mn(2+) is bound by residues Lys213 and His232. Asp269 contributes to the Mn(2+) binding site. ATP is bound by residues Glu297, Arg333, 449–450 (RI), and Thr455. A substrate-binding site is contributed by Arg333. Lys523 carries the N6-acetyllysine modification.

The protein belongs to the phosphoenolpyruvate carboxykinase (ATP) family. In terms of assembly, monomer. Mn(2+) serves as cofactor.

Its subcellular location is the cytoplasm. It catalyses the reaction oxaloacetate + ATP = phosphoenolpyruvate + ADP + CO2. Its pathway is carbohydrate biosynthesis; gluconeogenesis. Its function is as follows. Involved in the gluconeogenesis. Catalyzes the conversion of oxaloacetate (OAA) to phosphoenolpyruvate (PEP) through direct phosphoryl transfer between the nucleoside triphosphate and OAA. This chain is Phosphoenolpyruvate carboxykinase (ATP), found in Shigella dysenteriae serotype 1 (strain Sd197).